Here is an 83-residue protein sequence, read N- to C-terminus: UPF0297 protein LEUM_0557 (83 aa).

The protein belongs to the UPF0297 family.

In Leuconostoc mesenteroides subsp. mesenteroides (strain ATCC 8293 / DSM 20343 / BCRC 11652 / CCM 1803 / JCM 6124 / NCDO 523 / NBRC 100496 / NCIMB 8023 / NCTC 12954 / NRRL B-1118 / 37Y), this protein is UPF0297 protein LEUM_0557.